The sequence spans 261 residues: MTHQTHAYHMVNPSPWPLTGALSALLMTSGLAMWFHFNSVTLLTLGLTTNMLTMYQWWRDIIRESTFQGHHTPTVQKGLRYGMILFIISEVLFFTGFFWAFYHSSLAPTPELGGCWPPTGISPLNPLEVPLLNTSVLLASGVSITWAHHSLMEGNRNHMLQALFITIALGVYFTLLQASEYYEAPFTISDGIYGSTFFVATGFHGLHVIIGSTFLIVCFFRQLKFHFTSNHHFGFEAAAWYWHFVDVVWLFLYVSIYWWGS.

The Mitochondrial matrix portion of the chain corresponds to 1–15 (MTHQTHAYHMVNPSP). A helical transmembrane segment spans residues 16 to 34 (WPLTGALSALLMTSGLAMW). Topologically, residues 35 to 40 (FHFNSV) are mitochondrial intermembrane. A helical membrane pass occupies residues 41-66 (TLLTLGLTTNMLTMYQWWRDIIREST). The Mitochondrial matrix segment spans residues 67 to 72 (FQGHHT). A helical transmembrane segment spans residues 73-105 (PTVQKGLRYGMILFIISEVLFFTGFFWAFYHSS). At 106 to 128 (LAPTPELGGCWPPTGISPLNPLE) the chain is on the mitochondrial intermembrane side. A helical membrane pass occupies residues 129-152 (VPLLNTSVLLASGVSITWAHHSLM). Topologically, residues 153–155 (EGN) are mitochondrial matrix. A helical membrane pass occupies residues 156-183 (RNHMLQALFITIALGVYFTLLQASEYYE). At 184–190 (APFTISD) the chain is on the mitochondrial intermembrane side. Residues 191–223 (GIYGSTFFVATGFHGLHVIIGSTFLIVCFFRQL) form a helical membrane-spanning segment. The Mitochondrial matrix portion of the chain corresponds to 224–232 (KFHFTSNHH). The chain crosses the membrane as a helical span at residues 233–256 (FGFEAAAWYWHFVDVVWLFLYVSI). The Mitochondrial intermembrane portion of the chain corresponds to 257 to 261 (YWWGS).

Belongs to the cytochrome c oxidase subunit 3 family. Component of the cytochrome c oxidase (complex IV, CIV), a multisubunit enzyme composed of 14 subunits. The complex is composed of a catalytic core of 3 subunits MT-CO1, MT-CO2 and MT-CO3, encoded in the mitochondrial DNA, and 11 supernumerary subunits COX4I, COX5A, COX5B, COX6A, COX6B, COX6C, COX7A, COX7B, COX7C, COX8 and NDUFA4, which are encoded in the nuclear genome. The complex exists as a monomer or a dimer and forms supercomplexes (SCs) in the inner mitochondrial membrane with NADH-ubiquinone oxidoreductase (complex I, CI) and ubiquinol-cytochrome c oxidoreductase (cytochrome b-c1 complex, complex III, CIII), resulting in different assemblies (supercomplex SCI(1)III(2)IV(1) and megacomplex MCI(2)III(2)IV(2)).

The protein localises to the mitochondrion inner membrane. The catalysed reaction is 4 Fe(II)-[cytochrome c] + O2 + 8 H(+)(in) = 4 Fe(III)-[cytochrome c] + 2 H2O + 4 H(+)(out). In terms of biological role, component of the cytochrome c oxidase, the last enzyme in the mitochondrial electron transport chain which drives oxidative phosphorylation. The respiratory chain contains 3 multisubunit complexes succinate dehydrogenase (complex II, CII), ubiquinol-cytochrome c oxidoreductase (cytochrome b-c1 complex, complex III, CIII) and cytochrome c oxidase (complex IV, CIV), that cooperate to transfer electrons derived from NADH and succinate to molecular oxygen, creating an electrochemical gradient over the inner membrane that drives transmembrane transport and the ATP synthase. Cytochrome c oxidase is the component of the respiratory chain that catalyzes the reduction of oxygen to water. Electrons originating from reduced cytochrome c in the intermembrane space (IMS) are transferred via the dinuclear copper A center (CU(A)) of subunit 2 and heme A of subunit 1 to the active site in subunit 1, a binuclear center (BNC) formed by heme A3 and copper B (CU(B)). The BNC reduces molecular oxygen to 2 water molecules using 4 electrons from cytochrome c in the IMS and 4 protons from the mitochondrial matrix. The protein is Cytochrome c oxidase subunit 3 (MT-CO3) of Neotragus moschatus (Suni).